Here is a 120-residue protein sequence, read N- to C-terminus: Large ribosomal subunit protein uL18 (120 aa).

Residues 1-10 (MKRTRTESVQ) show a composition bias toward basic and acidic residues. Residues 1–24 (MKRTRTESVQRRHSRIRRKVEGTP) are disordered.

It belongs to the universal ribosomal protein uL18 family. In terms of assembly, part of the 50S ribosomal subunit; part of the 5S rRNA/L5/L18/L25 subcomplex. Contacts the 5S and 23S rRNAs.

In terms of biological role, this is one of the proteins that bind and probably mediate the attachment of the 5S RNA into the large ribosomal subunit, where it forms part of the central protuberance. In Gloeothece citriformis (strain PCC 7424) (Cyanothece sp. (strain PCC 7424)), this protein is Large ribosomal subunit protein uL18.